A 202-amino-acid chain; its full sequence is dITP/XTP pyrophosphatase (202 aa).

Substrate is bound at residue T9 to K14. The active-site Proton acceptor is D73. Position 73 (D73) interacts with Mg(2+). Substrate contacts are provided by residues S74, F158–D161, K181, and H186–R187.

The protein belongs to the HAM1 NTPase family. Homodimer. It depends on Mg(2+) as a cofactor.

The enzyme catalyses XTP + H2O = XMP + diphosphate + H(+). It carries out the reaction dITP + H2O = dIMP + diphosphate + H(+). The catalysed reaction is ITP + H2O = IMP + diphosphate + H(+). Its function is as follows. Pyrophosphatase that catalyzes the hydrolysis of nucleoside triphosphates to their monophosphate derivatives, with a high preference for the non-canonical purine nucleotides XTP (xanthosine triphosphate), dITP (deoxyinosine triphosphate) and ITP. Seems to function as a house-cleaning enzyme that removes non-canonical purine nucleotides from the nucleotide pool, thus preventing their incorporation into DNA/RNA and avoiding chromosomal lesions. The chain is dITP/XTP pyrophosphatase from Lactobacillus acidophilus (strain ATCC 700396 / NCK56 / N2 / NCFM).